The sequence spans 145 residues: uncharacterized protein (145 aa).

The tract at residues 1–49 is disordered; sequence MLSIFKNLLGTSEEDGTTQEANSKDTKGLKEERKRKKRKNKYKIPPGHT. The segment covering 22 to 32 has biased composition (basic and acidic residues); sequence NSKDTKGLKEE. Residues 33 to 42 show a composition bias toward basic residues; the sequence is RKRKKRKNKY. Serine 68 is modified (phosphoserine). Residues 69-145 enclose the Cytochrome b5 heme-binding domain; sequence PISVTAEELA…LKTSFVGYLV (77 aa). The heme site is built by histidine 104 and histidine 127.

The protein belongs to the cytochrome b5 family.

It is found in the cytoplasm. This is an uncharacterized protein from Schizosaccharomyces pombe (strain 972 / ATCC 24843) (Fission yeast).